Here is a 627-residue protein sequence, read N- to C-terminus: Protein fem-1 homolog B (627 aa).

ANK repeat units lie at residues 45–74 (QRSTPLIIAARNGHAKVVRLLLEHYRVQTQ), 87–116 (DGATALWCAAGAGHFEVVKLLVSHGANVNH), 120–149 (TNSTPLRAACFDGRLDIVKYLVENNANISI), and 153–182 (YDNTCLMIAAYKGHTDVVRYLLEQRADPNA). 3 residues coordinate Zn(2+): histidine 185, cysteine 186, and histidine 218. 2 ANK repeats span residues 186 to 215 (CGATALHFAAEAGHIDIVKELIKWRAAIVV) and 218 to 248 (HGMTPLKVAAESCKADVVELLLSHADCDRRS). Residues 344–377 (SHPIIYRGAVYADNMEFEQCIKLWLHALHLRQKG) form a TPR repeat. ANK repeat units lie at residues 483 to 527 (EGFS…EVNA) and 531 to 568 (EGNSALHIIVQYNRPISDFLTLHSIIISLVEAGAHTDM).

Belongs to the fem-1 family. In terms of assembly, component of a CRL2 E3 ubiquitin-protein ligase complex, also named ECS (Elongin BC-CUL2/5-SOCS-box protein) complex, composed of CUL2, Elongin BC (ELOB and ELOC), RBX1 and substrate-specific adapter FEM1B. Homooligomer. Interacts with PPM1F and PHTF1. Interacts with the death domain of FAS/TNFRSF6 and TNFRSF1A. Interacts with CHEK1. Interacts with NKX3-1. In terms of tissue distribution, expressed in pancreatic islets, within both beta cells and non-beta cells (at protein level). Highly expressed in adult testis; expressed in all types of spermatogonia. Also expressed in the prostate of neonatal mice.

The protein resides in the cytoplasm. It is found in the nucleus. It functions in the pathway protein modification; protein ubiquitination. Its activity is regulated as follows. Activity of the CRL2(FEM1B) complex toward FNIP1 is inhibited by BEX family proteins (BEX1, BEX2, BEX3 and/or BEX4) in absence of reductive stress. Mechanistically, BEX proteins act as pseudosubstrate inhibitors that associate with FEM1B via zinc in absence of reductive stress, thereby preventing association between FEM1B and FNIP1. In terms of biological role, substrate-recognition component of a Cul2-RING (CRL2) E3 ubiquitin-protein ligase complex of the DesCEND (destruction via C-end degrons) pathway, which recognizes a C-degron located at the extreme C terminus of target proteins, leading to their ubiquitination and degradation. The C-degron recognized by the DesCEND pathway is usually a motif of less than ten residues and can be present in full-length proteins, truncated proteins or proteolytically cleaved forms. The CRL2(FEM1B) complex specifically recognizes proteins ending with -Gly-Leu-Asp-Arg, such as CDK5R1, leading to their ubiquitination and degradation. Also acts as a regulator of the reductive stress response by mediating ubiquitination of reduced FNIP1: in response to reductive stress, the CRL2(FEM1B) complex specifically recognizes a conserved Cys degron in FNIP1 when this degron is reduced, leading to FNIP1 degradation and subsequent activation of mitochondria to recalibrate reactive oxygen species (ROS). Mechanistically, recognizes and binds reduced FNIP1 through two interface zinc ions, which act as a molecular glue that recruit reduced FNIP1 to FEM1B. Promotes ubiquitination of GLI1, suppressing GLI1 transcriptional activator activity. Promotes ubiquitination and degradation of ANKRD37. Promotes ubiquitination and degradation of SLBP. Involved in apoptosis by acting as a death receptor-associated protein that mediates apoptosis. Also involved in glucose homeostasis in pancreatic islet. May also act as an adapter/mediator in replication stress-induced signaling that leads to the activation of CHEK1. This Mus musculus (Mouse) protein is Protein fem-1 homolog B.